The following is a 517-amino-acid chain: Protein disulfide-isomerase A5 (517 aa).

The N-terminal stretch at 1–21 (MARAWGLLLAIGVVLPTWLSS) is a signal peptide. Disulfide bonds link Cys-83-Cys-92, Cys-180-Cys-183, Cys-303-Cys-306, and Cys-424-Cys-427. 3 consecutive Thioredoxin domains span residues 132–259 (FLKD…NPLP), 268–382 (PWAD…NPEA), and 376–504 (WMQN…TLRE). The short motif at 514-517 (REEL) is the Prevents secretion from ER element.

Belongs to the protein disulfide isomerase family. As to quaternary structure, interacts with CALR (via P-domain).

It localises to the endoplasmic reticulum lumen. The catalysed reaction is Catalyzes the rearrangement of -S-S- bonds in proteins.. This chain is Protein disulfide-isomerase A5 (Pdia5), found in Mus musculus (Mouse).